The sequence spans 354 residues: UDP-3-O-acylglucosamine N-acyltransferase (354 aa).

The active-site Proton acceptor is the H245.

It belongs to the transferase hexapeptide repeat family. LpxD subfamily. In terms of assembly, homotrimer.

The catalysed reaction is a UDP-3-O-[(3R)-3-hydroxyacyl]-alpha-D-glucosamine + a (3R)-hydroxyacyl-[ACP] = a UDP-2-N,3-O-bis[(3R)-3-hydroxyacyl]-alpha-D-glucosamine + holo-[ACP] + H(+). Its pathway is bacterial outer membrane biogenesis; LPS lipid A biosynthesis. Its function is as follows. Catalyzes the N-acylation of UDP-3-O-acylglucosamine using 3-hydroxyacyl-ACP as the acyl donor. Is involved in the biosynthesis of lipid A, a phosphorylated glycolipid that anchors the lipopolysaccharide to the outer membrane of the cell. In Anaeromyxobacter dehalogenans (strain 2CP-1 / ATCC BAA-258), this protein is UDP-3-O-acylglucosamine N-acyltransferase.